The primary structure comprises 350 residues: Type II restriction enzyme NgoBI (350 aa).

It carries out the reaction Endonucleolytic cleavage of DNA to give specific double-stranded fragments with terminal 5'-phosphates.. A P subtype restriction enzyme that recognizes the double-stranded sequence 5'-RGCGCY-3'; the cleavage site is unknown. In Neisseria gonorrhoeae, this protein is Type II restriction enzyme NgoBI (ngoBIR).